Here is a 70-residue protein sequence, read N- to C-terminus: MENMNMNKELIQQQTDKLEYYYNLMLEKLCNMVIASNASEVHEITRSFCEVLSDYKKYTDGKNIFNSYTE.

This is an uncharacterized protein from Dictyostelium discoideum (Social amoeba).